Here is a 263-residue protein sequence, read N- to C-terminus: Lens fiber major intrinsic protein (263 aa).

Residues 1 to 9 (MWELRSASF) are Cytoplasmic-facing. A helical transmembrane segment spans residues 10–29 (WRAIFAEFFATLFYVFFGLG). The Extracellular portion of the chain corresponds to 30–41 (ASLRWAPGPLHV). Residues 42-59 (LQVALAFGLALAXLVQTV) traverse the membrane as a helical segment. At 60-61 (GH) the chain is on the cytoplasmic side. The segment at residues 62–77 (ISGAHVNPAVTFXFLV) is an intramembrane region (discontinuously helical). The NPA 1 motif lies at 68-70 (NPA). The Cytoplasmic portion of the chain corresponds to 78-82 (GSQMS). A helical transmembrane segment spans residues 83-106 (LLRAFCYMAAQLLGAVAGAAVLYS). The Extracellular portion of the chain corresponds to 107–127 (VTPPAVRGNLALNTLHAGVSV). Residues 128 to 148 (XQATTVEIFLTLQFVLCIFAT) form a helical membrane-spanning segment. The Cytoplasmic portion of the chain corresponds to 149-156 (YDERRNGR). The helical transmembrane segment at 157-175 (LGSVALAVGFSLTLGHLFG) threads the bilayer. The Extracellular segment spans residues 176–178 (MYY). Residues 179–193 (TGAGMNPARSFAPAI) constitute an intramembrane region (discontinuously helical). Positions 184–186 (NPA) match the NPA 2 motif. The Extracellular segment spans residues 194-200 (LTRNFTN). A helical transmembrane segment spans residues 201–222 (HWVYWVGPIIGGGLGSLLYDFL). Over 223-263 (LFPRLKSVSERLSILKGTRPSDNNGQPEGTGEPVELKTQAL) the chain is Cytoplasmic. The interval 227-237 (LKSVSERLSIL) is interaction with CALM. Phosphoserine occurs at positions 235 and 243. Residues 238–263 (KGTRPSDNNGQPEGTGEPVELKTQAL) are disordered. A deamidated asparagine; by deterioration mark is found at Asn-245 and Asn-246.

This sequence belongs to the MIP/aquaporin (TC 1.A.8) family. Homotetramer; each monomer provides an independent water pore. Two homotetramers on opposing membranes can dimerize, forming a cell-cell junction. Interacts with CALM; the calcium-calmodulin/CALM complex interacts with the cytoplasmic domains of two aquaporins, leading to channel closure. Interacts with BFSP1 (via C-terminus); prevents calcium-dependent inhibition of the water channel activity. Subject to partial proteolytic cleavage in the eye lens core. Partial proteolysis promotes interactions between tetramers from adjoining membranes. In terms of processing, fatty acylated at Met-1 and Lys-238. The acyl modifications, in decreasing order of ion abundance, are: oleoyl (C18:1) &gt; palmitoyl (C16:0) &gt; stearoyl (C18:0) &gt; eicosenoyl (C20:1) &gt; dihomo-gamma-linolenoyl (C20:3) &gt; palmitoleoyl (C16:1) &gt; eicosadienoyl (C20:2). In terms of tissue distribution, detected in eye lens (at protein level).

It is found in the cell membrane. The protein resides in the cell junction. The enzyme catalyses H2O(in) = H2O(out). The water channel activity is inhibited by calcium through calmodulin/CALM. Aquaporins form homotetrameric transmembrane channels, with each monomer independently mediating water transport across the plasma membrane along its osmotic gradient. Specifically expressed in lens fiber cells, this aquaporin is crucial for maintaining lens water homeostasis and transparency. Beyond water permeability, it also acts as a cell-to-cell adhesion molecule, forming thin junctions between lens fiber cells that are essential for maintaining the ordered structure and transparency of the lens. The sequence is that of Lens fiber major intrinsic protein from Cavia porcellus (Guinea pig).